The sequence spans 60 residues: UPF0181 protein PMI1604 (60 aa).

Belongs to the UPF0181 family.

In Proteus mirabilis (strain HI4320), this protein is UPF0181 protein PMI1604.